A 90-amino-acid polypeptide reads, in one-letter code: Large ribosomal subunit protein bL27 (90 aa).

This sequence belongs to the bacterial ribosomal protein bL27 family.

In Paracoccus denitrificans (strain Pd 1222), this protein is Large ribosomal subunit protein bL27.